Here is a 325-residue protein sequence, read N- to C-terminus: uncharacterized protein (325 aa).

Residues 67 to 87 (WIPFFLLFSSVVVLGGLWWLG) form a helical membrane-spanning segment.

Its subcellular location is the membrane. This is an uncharacterized protein from Synechocystis sp. (strain ATCC 27184 / PCC 6803 / Kazusa).